Consider the following 144-residue polypeptide: MRLNTLSPAAGSKPSKKRVGRGIGSGLGKTGGRGHKGQKSRSGGSVRPGFEGGQMPLKQRLPKFGFTSRKSLVSAEVRLAELAKVTGDVVDLNSLKAANVITKNIEFVKIVLSGDLSKAVTVKGLRVTKGAKAAIEAAGGKIEE.

Residues 1–58 (MRLNTLSPAAGSKPSKKRVGRGIGSGLGKTGGRGHKGQKSRSGGSVRPGFEGGQMPLK) are disordered. Over residues 21–31 (RGIGSGLGKTG) the composition is skewed to gly residues.

Belongs to the universal ribosomal protein uL15 family. Part of the 50S ribosomal subunit.

In terms of biological role, binds to the 23S rRNA. The sequence is that of Large ribosomal subunit protein uL15 from Vibrio atlanticus (strain LGP32) (Vibrio splendidus (strain Mel32)).